The following is a 199-amino-acid chain: Ribonuclease HI (199 aa).

Residues 1-68 form a not required for RNase H activity region; sequence MPVVECDIQT…TAVVQPDRGG (68 aa). In terms of domain architecture, RNase H type-1 spans 66-197; it reads RGGRVHAYFD…ADALANEALD (132 aa). The interval 69–199 is as active as intact RNase H; it reads RVHAYFDGAS…ALANEALDDA (131 aa). 4 residues coordinate Mg(2+): Asp75, Glu115, Asp139, and Asp189. Positions 75, 115, 139, and 189 each coordinate Mn(2+).

The protein belongs to the RNase H family. Requires Mn(2+) as cofactor. It depends on Mg(2+) as a cofactor. Co(2+) is required as a cofactor. The cofactor is Ni(2+).

It localises to the cytoplasm. It catalyses the reaction Endonucleolytic cleavage to 5'-phosphomonoester.. In terms of biological role, nuclease that specifically degrades the RNA of RNA-DNA hybrids; seems to act exonucleolytically on RNA/DNA hybrids. Endonucleolytically removes RNA primers from the Okazaki fragments of lagging strand synthesis on its own. Complements the temperature-sensitive phenotype of an E.coli double rnhA/rnhB (RNase H) disruption mutant. This is Ribonuclease HI (rnhA) from Halobacterium salinarum (strain ATCC 700922 / JCM 11081 / NRC-1) (Halobacterium halobium).